A 340-amino-acid polypeptide reads, in one-letter code: Dihydroorotate dehydrogenase (quinone) (340 aa).

FMN is bound by residues 65–69 (AGLDK) and Thr89. Position 69 (Lys69) interacts with substrate. 114–118 (NRMGF) contributes to the substrate binding site. Residues Asn142 and Asn175 each contribute to the FMN site. Asn175 is a substrate binding site. The active-site Nucleophile is Ser178. Residue Asn180 coordinates substrate. FMN contacts are provided by Lys220 and Thr248. A substrate-binding site is contributed by 249–250 (NT). Residues Gly271, Gly300, and 321-322 (YT) each bind FMN.

The protein belongs to the dihydroorotate dehydrogenase family. Type 2 subfamily. Monomer. FMN is required as a cofactor.

Its subcellular location is the cell membrane. The enzyme catalyses (S)-dihydroorotate + a quinone = orotate + a quinol. The protein operates within pyrimidine metabolism; UMP biosynthesis via de novo pathway; orotate from (S)-dihydroorotate (quinone route): step 1/1. In terms of biological role, catalyzes the conversion of dihydroorotate to orotate with quinone as electron acceptor. This is Dihydroorotate dehydrogenase (quinone) from Paraburkholderia xenovorans (strain LB400).